Here is a 197-residue protein sequence, read N- to C-terminus: Proteasome subunit beta 1 (197 aa).

A propeptide spans 1–6 (removed in mature form; by autocatalysis); it reads MNRKTG. Residue threonine 7 is the Nucleophile of the active site.

The protein belongs to the peptidase T1B family. In terms of assembly, the 20S proteasome core is composed of 14 alpha and 14 beta subunits that assemble into four stacked heptameric rings, resulting in a barrel-shaped structure. The two inner rings, each composed of seven catalytic beta subunits, are sandwiched by two outer rings, each composed of seven alpha subunits. The catalytic chamber with the active sites is on the inside of the barrel. Has a gated structure, the ends of the cylinder being occluded by the N-termini of the alpha-subunits. Is capped at one or both ends by the proteasome regulatory ATPase, PAN.

Its subcellular location is the cytoplasm. It carries out the reaction Cleavage of peptide bonds with very broad specificity.. Its activity is regulated as follows. The formation of the proteasomal ATPase PAN-20S proteasome complex, via the docking of the C-termini of PAN into the intersubunit pockets in the alpha-rings, triggers opening of the gate for substrate entry. Interconversion between the open-gate and close-gate conformations leads to a dynamic regulation of the 20S proteasome proteolysis activity. Functionally, component of the proteasome core, a large protease complex with broad specificity involved in protein degradation. This Pyrococcus horikoshii (strain ATCC 700860 / DSM 12428 / JCM 9974 / NBRC 100139 / OT-3) protein is Proteasome subunit beta 1.